Reading from the N-terminus, the 602-residue chain is MTDISVSKIRNFCIIAHIDHGKSTLADRLLQDTGTVKQRDMQDQFLDSMDLERERGITIKLQAARMKYKAKDSQEYILNLIDTPGHVDFSYEVSRSLQACEGALLVVDASQGVEAQTLANVYLALENNLEIIPVLNKVDLPGADAEKIKQEIEEIIGLDTSNAINCSAKTGEGIEDILEAVVSRIPHPQNEVKSLTKALIFDSYYDPYRGVIVYFRVIAGSINKKDKILLMASKKNYELDEIGIMAPDEKQVNELHAGEVGYLAASIKSVADARVGDTITLFNSPAKDPLPGYKTANPMVFCGLFPTDADQYPDLRESLEKLQLSDAALKYEPETSSAMGFGFRCGFLGLLHMEIVQERLEREYDLDLIVTAPSVIYKVNLNDQEDILIDNPSTIPDPQSRESIEEPYVKMEIYSPNEFNGTLMGLCQERRGVFIDMKYITTDRVTLIYEIPLAEVVTDFFDQMKSRTQGYASMEYHLIGYRKNDLVRLDVLINSERADPLTSIVHKDKAYGIGRGLVEKLKELIPKQQFKIPIQASIGSRIIASESISALRKDVLSKCYGGDISRKKKLLKKQAKGKKRMKAMGKVDVPQEAFMAVLKLNQ.

In terms of domain architecture, tr-type G spans Ser7–Gln189. GTP is bound by residues Asp19 to Thr24 and Asn136 to Asp139.

The protein belongs to the TRAFAC class translation factor GTPase superfamily. Classic translation factor GTPase family. LepA subfamily.

Its subcellular location is the cell inner membrane. The enzyme catalyses GTP + H2O = GDP + phosphate + H(+). Required for accurate and efficient protein synthesis under certain stress conditions. May act as a fidelity factor of the translation reaction, by catalyzing a one-codon backward translocation of tRNAs on improperly translocated ribosomes. Back-translocation proceeds from a post-translocation (POST) complex to a pre-translocation (PRE) complex, thus giving elongation factor G a second chance to translocate the tRNAs correctly. Binds to ribosomes in a GTP-dependent manner. This Prochlorococcus marinus subsp. pastoris (strain CCMP1986 / NIES-2087 / MED4) protein is Elongation factor 4.